Here is a 164-residue protein sequence, read N- to C-terminus: C-type natriuretic peptide (164 aa).

Positions 1 to 23 (MVASRLAAGGLLLLALLALALDG) are cleaved as a signal peptide. 2 disordered regions span residues 24–93 (KPAP…AAAA) and 115–134 (HPEH…GASR). Residues 24-142 (KPAPPQPLRK…SRRLKGVAKK (119 aa)) constitute a propeptide that is removed on maturation. Residues 58 to 67 (AGGGGGGGRS) show a composition bias toward gly residues. Residues 68–93 (GSKAANAAPTAPKSKGGAAAAAAAAA) show a composition bias toward low complexity. The span at 121-132 (GGGGGGGGGGGA) shows a compositional bias: gly residues. Residues C148 and C164 are joined by a disulfide bond.

This sequence belongs to the natriuretic peptide family. In terms of tissue distribution, expressed by the venom gland.

It localises to the secreted. In terms of biological role, snake venom natriuretic peptide that has a vasorelaxant activity in rat aortic strips and a diuretic potency in anesthetized rats. May act by activating natriuretic receptors (NPR1 and/or NPR2). The chain is C-type natriuretic peptide from Philodryas olfersii (Green snake).